Consider the following 190-residue polypeptide: Peptidyl-tRNA hydrolase (190 aa).

A tRNA-binding site is contributed by Y14. Residue H19 is the Proton acceptor of the active site. Y64 and N66 together coordinate tRNA.

This sequence belongs to the PTH family. In terms of assembly, monomer.

It is found in the cytoplasm. It carries out the reaction an N-acyl-L-alpha-aminoacyl-tRNA + H2O = an N-acyl-L-amino acid + a tRNA + H(+). Its function is as follows. Hydrolyzes ribosome-free peptidyl-tRNAs (with 1 or more amino acids incorporated), which drop off the ribosome during protein synthesis, or as a result of ribosome stalling. Catalyzes the release of premature peptidyl moieties from peptidyl-tRNA molecules trapped in stalled 50S ribosomal subunits, and thus maintains levels of free tRNAs and 50S ribosomes. The protein is Peptidyl-tRNA hydrolase of Rhodopirellula baltica (strain DSM 10527 / NCIMB 13988 / SH1).